We begin with the raw amino-acid sequence, 137 residues long: 14 kDa proline-rich protein DC2.15 (137 aa).

Residues 1 to 25 (MGSKNSASVALFFTLNILFFALVSS) form the signal peptide. Residues 30–53 (PDPYKPKPKPTPKPTPTPYPSAGK) form a disordered region. Residues 38-48 (KPTPKPTPTPY) show a composition bias toward pro residues. The chain crosses the membrane as a helical span at residues 88–104 (LEGLVNLEAAVCLCTAI).

It localises to the membrane. Its function is as follows. May be connected with the initiation of embryogenesis or with the metabolic changes produced by the removal of auxins. In Daucus carota (Wild carrot), this protein is 14 kDa proline-rich protein DC2.15.